A 122-amino-acid polypeptide reads, in one-letter code: Probable dihydroneopterin aldolase (122 aa).

Substrate-binding positions include Glu-21, Tyr-54, and 73–74 (LE). The Proton donor/acceptor role is filled by Lys-101.

It belongs to the DHNA family.

The catalysed reaction is 7,8-dihydroneopterin = 6-hydroxymethyl-7,8-dihydropterin + glycolaldehyde. The protein operates within cofactor biosynthesis; tetrahydrofolate biosynthesis; 2-amino-4-hydroxy-6-hydroxymethyl-7,8-dihydropteridine diphosphate from 7,8-dihydroneopterin triphosphate: step 3/4. Functionally, catalyzes the conversion of 7,8-dihydroneopterin to 6-hydroxymethyl-7,8-dihydropterin. The chain is Probable dihydroneopterin aldolase (folB) from Chlamydia muridarum (strain MoPn / Nigg).